The sequence spans 316 residues: LIM/homeobox protein lim-6 (316 aa).

LIM zinc-binding domains follow at residues 40–101 and 102–163; these read KLCS…LYGK and RCRR…ICNF. The segment at residues 186–245 is a DNA-binding region (homeobox); the sequence is PKRPRTILNAQQRRQFKTAFERSSKPSRKVREQLANETGLSVRVVQVWFQNQRAKIKKLN. The tract at residues 244–297 is disordered; the sequence is LNKKDSDSGDTFKHGPGSEGRSTEDIRSSDDEEESVINLDADEVETSETSSYTD. The segment covering 246–256 has biased composition (basic and acidic residues); the sequence is KKDSDSGDTFK. The segment covering 273 to 289 has biased composition (acidic residues); that stretch reads DDEEESVINLDADEVET.

It localises to the nucleus. Functionally, transcription factor. Required for the terminal differentiation of sensory- and motor-neurons, especially GABAergic neurons, and for morphological aspects of uterine development. Plays a role in the cell-type-specific regulation of glutamic acid decarboxylase unc-25. Involved in promoting sleep-like behavioral quiescence, acting by modulating expression of transcription factor aptf-1 in the single sleep-active ring interneuron RIS. Plays a role in regulation of RIS differentiation. Required for the functional asymmetry of the ASER and ASEL chemosensory neuron pair, conferring the ability to discriminate sodium from chloride, perhaps by modulating expression of receptor-type guanylate cyclases, such as gcy-5. Involved in regulating postembryonic axon maintenance in the ventral nerve cord, acting in concert with LIM homeobox protein ceh-14, via modulation of expression of immunoglobulin domain zig genes in the interneuron PVT. May play a role in the functions of the excretory gland cell. This Caenorhabditis elegans protein is LIM/homeobox protein lim-6.